The chain runs to 319 residues: ATP-dependent 6-phosphofructokinase (319 aa).

Glycine 11 serves as a coordination point for ATP. 21-25 (RAVVR) contacts ADP. ATP contacts are provided by residues 72–73 (RC) and 102–105 (GDGS). Position 103 (aspartate 103) interacts with Mg(2+). 125–127 (TID) lines the substrate pocket. The active-site Proton acceptor is the aspartate 127. Arginine 154 is a binding site for ADP. Residues arginine 162 and 169-171 (MGR) each bind substrate. ADP contacts are provided by residues 185–187 (GAE), arginine 211, and 213–215 (KKH). Residues glutamate 222, arginine 243, and 249–252 (HVQR) contribute to the substrate site.

It belongs to the phosphofructokinase type A (PFKA) family. ATP-dependent PFK group I subfamily. Prokaryotic clade 'B1' sub-subfamily. As to quaternary structure, homotetramer. It depends on Mg(2+) as a cofactor.

The protein localises to the cytoplasm. It carries out the reaction beta-D-fructose 6-phosphate + ATP = beta-D-fructose 1,6-bisphosphate + ADP + H(+). It participates in carbohydrate degradation; glycolysis; D-glyceraldehyde 3-phosphate and glycerone phosphate from D-glucose: step 3/4. Its activity is regulated as follows. Allosterically activated by ADP and other diphosphonucleosides, and allosterically inhibited by phosphoenolpyruvate. In terms of biological role, catalyzes the phosphorylation of D-fructose 6-phosphate to fructose 1,6-bisphosphate by ATP, the first committing step of glycolysis. The sequence is that of ATP-dependent 6-phosphofructokinase from Bacillus anthracis (strain A0248).